The sequence spans 222 residues: uncharacterized protein (222 aa).

Positions 1–27 (MSFTRRKFVLGMGTVIFFTGSASSLLA) form a signal peptide, tat-type signal. 4Fe-4S ferredoxin-type domains are found at residues 37 to 66 (YAMI…PAQG), 83 to 114 (TQYH…RDEQ), and 115 to 144 (GIVR…LNPV). [4Fe-4S] cluster is bound by residues Cys46, Cys49, Cys52, Cys56, Cys92, Cys95, Cys100, Cys104, Cys124, Cys127, Cys130, Cys134, Cys151, Cys154, Cys167, and Cys171.

Post-translationally, predicted to be exported by the Tat system. The position of the signal peptide cleavage has not been experimentally proven.

This is an uncharacterized protein from Escherichia coli O157:H7.